The following is a 295-amino-acid chain: UDP-N-acetylenolpyruvoylglucosamine reductase (295 aa).

The FAD-binding PCMH-type domain occupies 23 to 188 (KVGGPADFLA…ISAKFALKPG (166 aa)). The active site involves Arg167. Residue Ser217 is the Proton donor of the active site. The active site involves Glu287.

Belongs to the MurB family. FAD is required as a cofactor.

The protein localises to the cytoplasm. The catalysed reaction is UDP-N-acetyl-alpha-D-muramate + NADP(+) = UDP-N-acetyl-3-O-(1-carboxyvinyl)-alpha-D-glucosamine + NADPH + H(+). It functions in the pathway cell wall biogenesis; peptidoglycan biosynthesis. Cell wall formation. This chain is UDP-N-acetylenolpyruvoylglucosamine reductase, found in Streptococcus pyogenes serotype M18 (strain MGAS8232).